Reading from the N-terminus, the 362-residue chain is Chorismate synthase (362 aa).

Residue Arg-46 coordinates NADP(+). FMN contacts are provided by residues 122–124 (RSS), 238–239 (NA), Gly-278, 293–297 (KPTPS), and Arg-319.

The protein belongs to the chorismate synthase family. Homotetramer. FMNH2 serves as cofactor.

It carries out the reaction 5-O-(1-carboxyvinyl)-3-phosphoshikimate = chorismate + phosphate. It participates in metabolic intermediate biosynthesis; chorismate biosynthesis; chorismate from D-erythrose 4-phosphate and phosphoenolpyruvate: step 7/7. Functionally, catalyzes the anti-1,4-elimination of the C-3 phosphate and the C-6 proR hydrogen from 5-enolpyruvylshikimate-3-phosphate (EPSP) to yield chorismate, which is the branch point compound that serves as the starting substrate for the three terminal pathways of aromatic amino acid biosynthesis. This reaction introduces a second double bond into the aromatic ring system. The sequence is that of Chorismate synthase from Campylobacter jejuni (strain RM1221).